A 257-amino-acid chain; its full sequence is Probable enoyl-CoA hydratase echA17 (257 aa).

Belongs to the enoyl-CoA hydratase/isomerase family.

It catalyses the reaction a (3S)-3-hydroxyacyl-CoA = a (2E)-enoyl-CoA + H2O. It carries out the reaction a 4-saturated-(3S)-3-hydroxyacyl-CoA = a (3E)-enoyl-CoA + H2O. Could possibly oxidize fatty acids using specific components. This Mycolicibacterium paratuberculosis (strain ATCC BAA-968 / K-10) (Mycobacterium paratuberculosis) protein is Probable enoyl-CoA hydratase echA17 (echA17).